Reading from the N-terminus, the 243-residue chain is DUF724 domain-containing protein 5 (243 aa).

The segment covering 1–24 has biased composition (basic and acidic residues); sequence MREKHYSEDNSRKRKRGELEHNSD. Residues 1–51 form a disordered region; it reads MREKHYSEDNSRKRKRGELEHNSDLNETVLPSDWTPDPVKNFAADDDDEET. Positions 59–243 constitute a DUF724 domain; that stretch reads VLPFVKKSPV…DLGVELEDVE (185 aa). A coiled-coil region spans residues 174-223; that stretch reads KEMKDESSKKHKAEQEFGEMERKILEVKNKVLELQKQEAALEKQKDATYE.

As to quaternary structure, homodimer. Expressed in leaves, flowers and siliques.

The protein localises to the nucleus. Its function is as follows. May be involved in the polar growth of plant cells via transportation of RNAs. This is DUF724 domain-containing protein 5 from Arabidopsis thaliana (Mouse-ear cress).